Consider the following 721-residue polypeptide: 1,4-alpha-glucan branching enzyme GlgB (721 aa).

Catalysis depends on Asp-404, which acts as the Nucleophile. Residue Glu-457 is the Proton donor of the active site.

It belongs to the glycosyl hydrolase 13 family. GlgB subfamily. Monomer.

It catalyses the reaction Transfers a segment of a (1-&gt;4)-alpha-D-glucan chain to a primary hydroxy group in a similar glucan chain.. It functions in the pathway glycan biosynthesis; glycogen biosynthesis. Catalyzes the formation of the alpha-1,6-glucosidic linkages in glycogen by scission of a 1,4-alpha-linked oligosaccharide from growing alpha-1,4-glucan chains and the subsequent attachment of the oligosaccharide to the alpha-1,6 position. This is 1,4-alpha-glucan branching enzyme GlgB from Bradyrhizobium diazoefficiens (strain JCM 10833 / BCRC 13528 / IAM 13628 / NBRC 14792 / USDA 110).